We begin with the raw amino-acid sequence, 282 residues long: Elongation factor Ts (282 aa).

The segment at 80-83 (TDFV) is involved in Mg(2+) ion dislocation from EF-Tu.

The protein belongs to the EF-Ts family.

The protein localises to the cytoplasm. Its function is as follows. Associates with the EF-Tu.GDP complex and induces the exchange of GDP to GTP. It remains bound to the aminoacyl-tRNA.EF-Tu.GTP complex up to the GTP hydrolysis stage on the ribosome. This Chlamydia felis (strain Fe/C-56) (Chlamydophila felis) protein is Elongation factor Ts.